A 913-amino-acid polypeptide reads, in one-letter code: Alanine--tRNA ligase (913 aa).

4 residues coordinate Zn(2+): H608, H612, C711, and H715.

Belongs to the class-II aminoacyl-tRNA synthetase family. Requires Zn(2+) as cofactor.

Its subcellular location is the cytoplasm. It carries out the reaction tRNA(Ala) + L-alanine + ATP = L-alanyl-tRNA(Ala) + AMP + diphosphate. Its function is as follows. Catalyzes the attachment of alanine to tRNA(Ala) in a two-step reaction: alanine is first activated by ATP to form Ala-AMP and then transferred to the acceptor end of tRNA(Ala). Also edits incorrectly charged Ser-tRNA(Ala) and Gly-tRNA(Ala) via its editing domain. The protein is Alanine--tRNA ligase of Methanocorpusculum labreanum (strain ATCC 43576 / DSM 4855 / Z).